A 532-amino-acid chain; its full sequence is 2,3-bisphosphoglycerate-independent phosphoglycerate mutase (532 aa).

Mn(2+) contacts are provided by Asp-15 and Ser-65. The Phosphoserine intermediate role is filled by Ser-65. Substrate-binding positions include His-126, 156-157 (RD), Arg-188, Arg-194, 258-261 (RPDR), and Lys-331. The Mn(2+) site is built by Asp-398, His-402, Asp-439, His-440, and His-457.

This sequence belongs to the BPG-independent phosphoglycerate mutase family. Monomer. Mn(2+) is required as a cofactor.

The catalysed reaction is (2R)-2-phosphoglycerate = (2R)-3-phosphoglycerate. The protein operates within carbohydrate degradation; glycolysis; pyruvate from D-glyceraldehyde 3-phosphate: step 3/5. Functionally, catalyzes the interconversion of 2-phosphoglycerate and 3-phosphoglycerate. The polypeptide is 2,3-bisphosphoglycerate-independent phosphoglycerate mutase (Rippkaea orientalis (strain PCC 8801 / RF-1) (Cyanothece sp. (strain PCC 8801))).